The sequence spans 435 residues: 3-phosphoshikimate 1-carboxyvinyltransferase (435 aa).

The 3-phosphoshikimate site is built by Lys-22, Ser-23, and Arg-27. Lys-22 contributes to the phosphoenolpyruvate binding site. Residues Gly-95 and Arg-123 each contribute to the phosphoenolpyruvate site. The 3-phosphoshikimate site is built by Ser-168, Gln-170, Asp-319, and Lys-346. Gln-170 is a phosphoenolpyruvate binding site. The active-site Proton acceptor is Asp-319. The phosphoenolpyruvate site is built by Arg-350 and Arg-393.

The protein belongs to the EPSP synthase family. As to quaternary structure, monomer.

It is found in the cytoplasm. The catalysed reaction is 3-phosphoshikimate + phosphoenolpyruvate = 5-O-(1-carboxyvinyl)-3-phosphoshikimate + phosphate. It participates in metabolic intermediate biosynthesis; chorismate biosynthesis; chorismate from D-erythrose 4-phosphate and phosphoenolpyruvate: step 6/7. Its function is as follows. Catalyzes the transfer of the enolpyruvyl moiety of phosphoenolpyruvate (PEP) to the 5-hydroxyl of shikimate-3-phosphate (S3P) to produce enolpyruvyl shikimate-3-phosphate and inorganic phosphate. This Chloroflexus aurantiacus (strain ATCC 29364 / DSM 637 / Y-400-fl) protein is 3-phosphoshikimate 1-carboxyvinyltransferase.